The sequence spans 417 residues: Odorant receptor Or1 (417 aa).

Residues 1–2 (MK) lie on the Cytoplasmic side of the membrane. Residues 3-23 (LNKLNPRWDAYDRRDSFWLQL) form a helical membrane-spanning segment. Over 24–45 (LCLKYLGLWPPEDTDQATRNRY) the chain is Extracellular. The chain crosses the membrane as a helical span at residues 46 to 66 (IAYGWALRIMFLHLYALTQAL). The Cytoplasmic segment spans residues 67 to 73 (YFKDVKD). A helical transmembrane segment spans residues 74–94 (INDIANALFVLMTQVTLIYKL). The Extracellular segment spans residues 95 to 133 (EKFNYNIARIQACLRKLNCTLYHPKQREEFSPVLQSMSG). Residue Asn-112 is glycosylated (N-linked (GlcNAc...) asparagine). The chain crosses the membrane as a helical span at residues 134 to 154 (VFWLMIFLMFVAIFTIIMWVM). Over 155-178 (SPAFDNERRLPVPAWFPVDYHHSD) the chain is Cytoplasmic. Residues 179-199 (IVYGVLFLYQTIGIVMSATYN) form a helical membrane-spanning segment. Residues 200 to 284 (FSTDTMFSGL…ILSFGDEVQD (85 aa)) are Extracellular-facing. Residues 285–305 (IFQGSIFAQVCASVIIICMTL) form a helical membrane-spanning segment. The Cytoplasmic segment spans residues 306-317 (LQATGDDVTMAD). Residues 318–338 (LLGCGFYLLVMTSQVFIFCYV) form a helical membrane-spanning segment. Residues 339–417 (GNEISYTTDK…LAVLQSMESE (79 aa)) lie on the Extracellular side of the membrane.

This sequence belongs to the insect chemoreceptor superfamily. Heteromeric odorant receptor channel (TC 1.A.69) family. Or2a subfamily. In terms of tissue distribution, female-specific antennae and maxillary palp expression.

It localises to the cell membrane. Odorant receptor which plays a critical role in the anthropophilic host-seeking behavior; establishes the host preference to transmit malaria. May participate in the phenomenon of decreased host-seeking behavior in disease vector mosquitoes after blood feeding. The protein is Odorant receptor Or1 (OR1) of Anopheles gambiae (African malaria mosquito).